A 390-amino-acid polypeptide reads, in one-letter code: 4-hydroxy-3-methylbut-2-en-1-yl diphosphate synthase (flavodoxin) (390 aa).

[4Fe-4S] cluster-binding residues include Cys-281, Cys-284, Cys-316, and Glu-323.

It belongs to the IspG family. Requires [4Fe-4S] cluster as cofactor.

The catalysed reaction is (2E)-4-hydroxy-3-methylbut-2-enyl diphosphate + oxidized [flavodoxin] + H2O + 2 H(+) = 2-C-methyl-D-erythritol 2,4-cyclic diphosphate + reduced [flavodoxin]. It functions in the pathway isoprenoid biosynthesis; isopentenyl diphosphate biosynthesis via DXP pathway; isopentenyl diphosphate from 1-deoxy-D-xylulose 5-phosphate: step 5/6. In terms of biological role, converts 2C-methyl-D-erythritol 2,4-cyclodiphosphate (ME-2,4cPP) into 1-hydroxy-2-methyl-2-(E)-butenyl 4-diphosphate. In Salinispora tropica (strain ATCC BAA-916 / DSM 44818 / JCM 13857 / NBRC 105044 / CNB-440), this protein is 4-hydroxy-3-methylbut-2-en-1-yl diphosphate synthase (flavodoxin).